A 529-amino-acid polypeptide reads, in one-letter code: MLQSTLDPNASAYDEAAATMSGKLDEINAELAKALAGGGPKYVDRHHARGNLTPRERIELLVDPDSPFLELSPLAAYGSNFQIGASLVTGIGAVCGVECMIVANDPTVKGGTSNPWTLRKILRANQIAFENRLPVISLVESGGADLPTQKEIFIPGGQMFRDLTRLSAAGIPTIALVFGNSTAGGAYVPGMSDHVVMIKERSKVFLAGPPLVKMATGEESDDESLGGAEMHARISGLADYFALDELDAIRIGRRIVARLNWIKQGPAPAPVTEPLFDAEELIGIVPPDLRIPFDPREVIARIVDGSEFDEFKPLYGSSLVTGWARLHGYPLGILANARGVLFSEESQKATQFIQLANRADTPLLFLHNTTGYMVGKDYEEGGMIKHGSMMINAVSNSTVPHISLLIGASYGAGHYGMCGRAYDPRFLFAWPSAKSAVMGGAQLSGVLSIVARAAAEARGQQVDEAADAAMRAAVEGQIEAESLPLVLSGMLYDDGVIDPRDTRTVLGMCLSAIANGPIKGTSNFGVFRM.

One can recognise a CoA carboxyltransferase N-terminal domain in the interval 20–271 (MSGKLDEINA…IKQGPAPAPV (252 aa)). Residues 270–520 (PVTEPLFDAE…SAIANGPIKG (251 aa)) form the CoA carboxyltransferase C-terminal domain.

The protein belongs to the AccD/PCCB family. In terms of assembly, the biotin-dependent acyl-CoA carboxylase complex is composed of an AccA protein, which contains the biotin carboxylase (BC) and biotin carboxyl carrier protein (BCCP) domains, and an AccD protein, which contains the carboxyl transferase (CT) domain.

Its function is as follows. Component of a biotin-dependent acyl-CoA carboxylase complex. This subunit transfers the CO2 from carboxybiotin to the CoA ester substrate. The sequence is that of Probable biotin-dependent acyl-coenzyme A carboxylase beta2 subunit (accD2) from Mycobacterium tuberculosis (strain ATCC 25618 / H37Rv).